The sequence spans 192 residues: MERLILASNSPRRKEILQNLHVKFDIIVSDVDEVFNEKDHPAKIVETLAYLKAEDVANRIDRDAIIIGADTIVVKNGIIGKPKNKQDARDILRTLSGDVHEVITGIVVLDTSSGYTVIDHVVTEVYMKKITDEEIERYIATGEPMDKAGAYGIQGRAAVFVEKIVGDYYNVVGLPICKLGEVLHKHFHINLL.

D70 functions as the Proton acceptor in the catalytic mechanism.

Belongs to the Maf family. YhdE subfamily. A divalent metal cation is required as a cofactor.

Its subcellular location is the cytoplasm. It carries out the reaction dTTP + H2O = dTMP + diphosphate + H(+). The catalysed reaction is UTP + H2O = UMP + diphosphate + H(+). Nucleoside triphosphate pyrophosphatase that hydrolyzes dTTP and UTP. May have a dual role in cell division arrest and in preventing the incorporation of modified nucleotides into cellular nucleic acids. This Alkaliphilus metalliredigens (strain QYMF) protein is dTTP/UTP pyrophosphatase.